The following is a 140-amino-acid chain: Putative nickel-responsive regulator 3 (140 aa).

Histidine 81, histidine 92, histidine 94, and cysteine 100 together coordinate Ni(2+).

The protein belongs to the transcriptional regulatory CopG/NikR family. Ni(2+) is required as a cofactor.

Functionally, transcriptional regulator. This chain is Putative nickel-responsive regulator 3, found in Methanosarcina acetivorans (strain ATCC 35395 / DSM 2834 / JCM 12185 / C2A).